Reading from the N-terminus, the 416-residue chain is tRNA (guanine-N(7)-)-methyltransferase non-catalytic subunit wuho (416 aa).

The segment at 47-88 is disordered; that stretch reads TQSQESCPATATSTTAGKEPGGKEQQLAKQPEEGGTSASGSV. Polar residues predominate over residues 49-62; sequence SQESCPATATSTTA. WD repeat units lie at residues 89–130, 177–216, 220–258, and 317–357; these read ATST…ARLL, GHLS…DIHS, GHRE…ELLQ, and AGSW…PTTN.

Belongs to the WD repeat TRM82 family. Forms a heterodimer with the catalytic subunit Mettl1. Interacts with mei-P26 and weakly interacts with bgcn; required for the function or formation of the mei-P26-bgcn-bam-sxl complex. Interacts with nanos; may be involved in mei-P26-dependent derepression of the BMP signaling pathway. Interacts with Myc; the interaction may be mediated by mei-P26 and may be involved in the regulation of ribosome biogenesis. As to expression, in testis, it is present at high level in hub cells, a niche for germline stem cells of testis. Ubiquitously expressed in all testicular cells throughout spermatogenesis. Ubiquitously expressed in all germline and somatic cells of the ovary.

The protein localises to the nucleus. It localises to the cytoplasm. It participates in tRNA modification; N(7)-methylguanine-tRNA biosynthesis. Functionally, required for the Mettl1-dependent formation of N(7)-methylguanine at position 46 (m7G46) in tRNA. In the Mettl1-wuho methyltransferase complex, it is required to stabilize and induce conformational changes of the catalytic subunit. Required for binding of nanos mRNA and repression of translation by the mei-P26-bgcn-bam-sxl complex. May cooperate with mei-P26 and nanos to derepress the BMP signaling pathway. May cooperate with mei-P26 to suppress expression of a subset of microRNAs. May cooperate with mei-P26 to regulate bam expression levels in germline cells during gametogenesis. Required to promote mitosis to meiosis transition during gametogenesis. May regulate germline cell division in part by regulating ribosome biogenesis. This is tRNA (guanine-N(7)-)-methyltransferase non-catalytic subunit wuho from Drosophila erecta (Fruit fly).